A 66-amino-acid polypeptide reads, in one-letter code: Beta-toxin Cb2 (66 aa).

Residues 1 to 66 (KEGYLVDLHT…VWPLPNKRCK (66 aa)) form the LCN-type CS-alpha/beta domain. 4 disulfides stabilise this stretch: Cys-12-Cys-65, Cys-16-Cys-41, Cys-25-Cys-46, and Cys-29-Cys-48.

This sequence belongs to the long (4 C-C) scorpion toxin superfamily. Sodium channel inhibitor family. Beta subfamily. As to expression, expressed by the venom gland.

The protein resides in the secreted. Beta toxins bind voltage-independently at site-4 of sodium channels (Nav) and reduces peak current and shifts the voltage of activation toward more negative potentials thereby affecting sodium channel activation and promoting spontaneous and repetitive firing. Has an inhibitory effect on voltage-gated sodium channel hNav1.6/SCN8A, affecting both the activation and inactivation processes. Also reduces the peak current of hNav1.5/SCN5A but does not shift its voltage of activation. This toxin is active against mammals and lethal to mice. The protein is Beta-toxin Cb2 of Centruroides baergi (Scorpion).